The chain runs to 289 residues: Energy-coupling factor transporter ATP-binding protein EcfA2 (289 aa).

Positions 3–245 (IEFKNVDYVY…QEWVKKHYLD (243 aa)) constitute an ABC transporter domain. ATP is bound at residue 40–47 (GHTGSGKS).

The protein belongs to the ABC transporter superfamily. Energy-coupling factor EcfA family. In terms of assembly, forms a stable energy-coupling factor (ECF) transporter complex composed of 2 membrane-embedded substrate-binding proteins (S component), 2 ATP-binding proteins (A component) and 2 transmembrane proteins (T component).

Its subcellular location is the cell membrane. ATP-binding (A) component of a common energy-coupling factor (ECF) ABC-transporter complex. Unlike classic ABC transporters this ECF transporter provides the energy necessary to transport a number of different substrates. This Lactobacillus johnsonii (strain CNCM I-12250 / La1 / NCC 533) protein is Energy-coupling factor transporter ATP-binding protein EcfA2.